Reading from the N-terminus, the 172-residue chain is Sec-independent protein translocase protein TatB (172 aa).

The chain crosses the membrane as a helical span at residues 1–21; the sequence is MIDLGISKLALIGAVALVVIG. Residues 97–129 are disordered; sequence GDPASRQTATQAAEWRPAPAKSRNGRNSWRNKQ.

The protein belongs to the TatB family. As to quaternary structure, the Tat system comprises two distinct complexes: a TatABC complex, containing multiple copies of TatA, TatB and TatC subunits, and a separate TatA complex, containing only TatA subunits. Substrates initially bind to the TatABC complex, which probably triggers association of the separate TatA complex to form the active translocon.

The protein resides in the cell inner membrane. In terms of biological role, part of the twin-arginine translocation (Tat) system that transports large folded proteins containing a characteristic twin-arginine motif in their signal peptide across membranes. Together with TatC, TatB is part of a receptor directly interacting with Tat signal peptides. TatB may form an oligomeric binding site that transiently accommodates folded Tat precursor proteins before their translocation. The chain is Sec-independent protein translocase protein TatB from Ralstonia nicotianae (strain ATCC BAA-1114 / GMI1000) (Ralstonia solanacearum).